Reading from the N-terminus, the 155-residue chain is Pathogenesis-related protein A (155 aa).

It belongs to the BetVI family.

In Petroselinum crispum (Parsley), this protein is Pathogenesis-related protein A (PCPR1-1).